The sequence spans 110 residues: Thiosulfate sulfurtransferase GlpE (110 aa).

A Rhodanese domain is found at 17–105; sequence RENGAQVVDI…WRSVYPADTS (89 aa). C65 functions as the Cysteine persulfide intermediate in the catalytic mechanism.

This sequence belongs to the GlpE family.

The protein resides in the cytoplasm. The enzyme catalyses thiosulfate + hydrogen cyanide = thiocyanate + sulfite + 2 H(+). It carries out the reaction thiosulfate + [thioredoxin]-dithiol = [thioredoxin]-disulfide + hydrogen sulfide + sulfite + 2 H(+). In terms of biological role, transferase that catalyzes the transfer of sulfur from thiosulfate to thiophilic acceptors such as cyanide or dithiols. May function in a CysM-independent thiosulfate assimilation pathway by catalyzing the conversion of thiosulfate to sulfite, which can then be used for L-cysteine biosynthesis. The polypeptide is Thiosulfate sulfurtransferase GlpE (Pseudomonas aeruginosa (strain ATCC 15692 / DSM 22644 / CIP 104116 / JCM 14847 / LMG 12228 / 1C / PRS 101 / PAO1)).